The sequence spans 181 residues: MIFLGPVLLTRGALSFFLTAGGSSVYRAWSWWLSGIHLFMAFSMSTSSLYKVGFGFVCTKSPCLRVSLISRSQPWRFYSVHNNFEAPDVVQLAAKARISLTPKEVEDYGPKIGQVIDWFGQLQGVNLENVEPAIRADTDKLSNLRPDEPIIYEDREEMIAGVPTLEEPFIKVPKILKSSME.

It belongs to the GatC family. Subunit of the heterotrimeric GatCAB amidotransferase (AdT) complex, composed of A, B and C subunits.

It localises to the mitochondrion. The protein localises to the plastid. The protein resides in the chloroplast. The catalysed reaction is L-glutamyl-tRNA(Gln) + L-glutamine + ATP + H2O = L-glutaminyl-tRNA(Gln) + L-glutamate + ADP + phosphate + H(+). Functionally, allows the formation of correctly charged Gln-tRNA(Gln) through the transamidation of misacylated Glu-tRNA(Gln) in chloroplasts and mitochondria. The reaction takes place in the presence of glutamine and ATP through an activated gamma-phospho-Glu-tRNA(Gln). The protein is Glutamyl-tRNA(Gln) amidotransferase subunit C, chloroplastic/mitochondrial of Picea sitchensis (Sitka spruce).